Consider the following 777-residue polypeptide: MAPTAPAKKRKQSAEVTELSDDEIIDGLLDGALSQSEDDSDFVASGDEDEEDEDEDEDEDKDEDDEHDDKQDIGDLQDLSLNDLDDDAQSKELAKDGANGGSGDGPEADDEDRPNYRVVEDANGGIRYVYDEINPVYDSDDSDKEEDNRIGDIPLSFYEAYPHVGYTIDGKKLMRPSERRQALDSLLDSIEIPKGWTGLTDPTTGKPLNLSQDELELLKRVQMNEIPEEGYDPYPDTVEYFTGIEEKMPLSAAPEPKRRFIPSKHEAKRVMKLVRAIREGRIQPYKSKEEREKEEEGKEEKYYDVWQDEQPRDPHVMHIPAPKLAPPGYDMSYNPPPEYLPTKAEREEWEKMDPEDREKEYLPQKFDALRKVPGYETFVKERFERCLDLYLAPRVRKNRLNIDPASLLPKLPRPEELKPFPTVCQAIFRGHEGRVRSSAIDPTGLWLATGGDDGYVRIWLINPARQVWAVKLSSDEAVNAVRWRPTKDTMILAAAAGEEIFLMVPPDIDPEVEQTSRAVLDAGFGHAAGGADKQTTDGKAPAAKWARPGARLEDEGVLVKVTVRSPVKVISWHRRGDHFCTVSPSGQRSSVAVHTLSKHLSQIPFRKLSGLAQVAHFHPSRPLFFVATQRTIRCYDLQRLELVKVVQPGARWISSFDIHPGGDNLIVGSYDRRLLWHDLDLSTRPYKTMRFHPQAIRAVKYHRGGLPLFADASDDGSLQIFHGKVVSDLMENATIVPLKSLKGHRVVDSLGVMDVDWHPSEPWCISAGADGTCRLWM.

Residues 1–122 are disordered; that stretch reads MAPTAPAKKR…RPNYRVVEDA (122 aa). Acidic residues predominate over residues 36–67; sequence SEDDSDFVASGDEDEEDEDEDEDEDKDEDDEH. 7 WD repeats span residues 430 to 469, 473 to 513, 562 to 604, 606 to 645, 648 to 687, 691 to 731, and 747 to 777; these read GHEGRVRSSAIDPTGLWLATGGDDGYVRIWLINPARQVWA, SSDE…PEVE, TVRS…SQIP, RKLSGLAQVAHFHPSRPLFFVATQRTIRCYDLQRLELVKV, PGARWISSFDIHPGGDNLIVGSYDRRLLWHDLDLSTRPYK, FHPQ…DLME, and VDSLGVMDVDWHPSEPWCISAGADGTCRLWM.

The protein belongs to the WD repeat BOP1/ERB1 family. In terms of assembly, component of the NOP7 complex, composed of ERB1, NOP7 and YTM1. The complex is held together by ERB1, which interacts with NOP7 via its N-terminal domain and with YTM1 via a high-affinity interaction between the seven-bladed beta-propeller domains of the 2 proteins. The NOP7 complex associates with the 66S pre-ribosome.

Its subcellular location is the nucleus. The protein resides in the nucleolus. It is found in the nucleoplasm. Component of the NOP7 complex, which is required for maturation of the 25S and 5.8S ribosomal RNAs and formation of the 60S ribosome. The sequence is that of Ribosome biogenesis protein ERB1 from Pyricularia oryzae (strain 70-15 / ATCC MYA-4617 / FGSC 8958) (Rice blast fungus).